The sequence spans 525 residues: COP9 signalosome complex subunit 1b (525 aa).

A PCI domain is found at 298 to 460 (HFLNANFDHC…KILFAKEADQ (163 aa)).

It belongs to the CSN1 family. As to quaternary structure, component of the CSN complex, probably composed of CSN1b, alien/CSN2, CSN3, CSN4, CSN5, CSN6, CSN7 and CSN8.

The protein localises to the cytoplasm. The protein resides in the nucleus. In terms of biological role, essential component of the COP9 signalosome complex (CSN), a complex involved in various cellular and developmental processes. The CSN complex is an essential regulator of the ubiquitin (Ubl) conjugation pathway by mediating the deneddylation of the cullin subunits of the SCF-type E3 ligase complexes, leading to decrease the Ubl ligase activity of SCF. The CSN complex plays an essential role in oogenesis and embryogenesis and is required for proper photoreceptor R cell differentiation and promote lamina glial cell migration or axon targeting. It also promotes Ubl-dependent degradation of cyclin E (CycE) during early oogenesis. The protein is COP9 signalosome complex subunit 1b (CSN1b) of Drosophila melanogaster (Fruit fly).